The sequence spans 240 residues: Transmembrane protein 65 (240 aa).

A mitochondrion-targeting transit peptide spans 1-61; the sequence is MSRLLPLLRS…RRLGTHPKKE (61 aa). Over 62 to 110 the chain is Cytoplasmic; sequence PMEALNTAQGARDFIYSLHSTERSCLLKELHRFESIAIAQEKLEAPPPT. The chain crosses the membrane as a helical span at residues 111-131; the sequence is PGQLRYVFIHNAIPFIGFGFL. Residues 132–142 lie on the Extracellular side of the membrane; that stretch reads DNAIMIVAGTH. A helical membrane pass occupies residues 143 to 165; it reads IEMSIGIILGISTMAAAALGNLV. Over 166-209 the chain is Cytoplasmic; that stretch reads SDLAGLGLAGYVEALASRLGLSIPDLTPKQVDMWQTRLSTHLGK. A helical transmembrane segment spans residues 210-230; sequence AVGVTIGCILGMFPLIFFGGG. Over 231-240 the chain is Extracellular; that stretch reads EEDEKLETKS.

As to quaternary structure, monomer. Homodimer. Interacts with GJA1. Interacts weakly with DSP. Interacts with SCN1B. Predominantly expressed the ventricular tissue (at protein level).

It is found in the cell membrane. Its subcellular location is the mitochondrion inner membrane. Essential for maintaining proper cardiac intercalated disk (ICD) structure and function as well as cardiac conduction velocity in the heart. Its association with SCN1B is required for stabilizing the perinexus in the ICD and for localization of GJA1 and SCN5A to the ICD. May regulate the function of the gap junction protein GJA1 and may contribute to the stability and proper localization of GJA1 to cardiac intercalated disk thereby regulating gap junction communication. May also play a role in the regulation of mitochondrial respiration and mitochondrial DNA copy number maintenance. This is Transmembrane protein 65 (TMEM65) from Homo sapiens (Human).